Consider the following 173-residue polypeptide: RNA pyrophosphohydrolase (173 aa).

A Nudix hydrolase domain is found at G6 to K149. The Nudix box signature appears at G38–G59.

This sequence belongs to the Nudix hydrolase family. RppH subfamily. A divalent metal cation is required as a cofactor.

Functionally, accelerates the degradation of transcripts by removing pyrophosphate from the 5'-end of triphosphorylated RNA, leading to a more labile monophosphorylated state that can stimulate subsequent ribonuclease cleavage. The chain is RNA pyrophosphohydrolase from Shewanella pealeana (strain ATCC 700345 / ANG-SQ1).